An 808-amino-acid chain; its full sequence is Leucine-rich repeat-containing protein 41 (808 aa).

Residues 45–54 (ALFELCGRAV) form an interaction with Elongin BC complex region. 3 positions are modified to phosphoserine: S155, S276, and S326. 2 disordered regions span residues 269 to 289 (ASRG…SRRP) and 304 to 404 (TRRK…GSGA). Residue T327 is modified to Phosphothreonine. Low complexity predominate over residues 357 to 379 (PSSAPTAASSSTSSKRAPASSVS). S369 is modified (phosphoserine). A compositionally biased stretch (basic residues) spans 383 to 397 (PLKRFKRATGKKGPR). LRR repeat units lie at residues 483 to 503 (WVSL…IFRL), 514 to 526 (AGCR…LSDL), 527 to 551 (FSPL…VLSI), 609 to 631 (SGSL…FGLV), 632 to 655 (LQTL…LADC), 697 to 724 (NSTL…VFSE), and 727 to 748 (SSSL…LLEF).

In terms of assembly, part of an E3 ubiquitin-protein ligase complex with Elongin BC (ELOB and ELOC), RBX1 and CUL5. Component of a probable ECS(LRRC41) complex which contains CUL5, RNF7/RBX2, Elongin BC and LRRC41. Interacts with CUL5, RNF7, ELOB and ELOC.

Its pathway is protein modification; protein ubiquitination. In terms of biological role, probable substrate recognition component of an ECS (Elongin BC-CUL2/5-SOCS-box protein) E3 ubiquitin ligase complex which mediates the ubiquitination and subsequent proteasomal degradation of target proteins. This is Leucine-rich repeat-containing protein 41 (Lrrc41) from Rattus norvegicus (Rat).